We begin with the raw amino-acid sequence, 321 residues long: Glycerol-3-phosphate dehydrogenase [NAD(P)+] (321 aa).

3 residues coordinate NADPH: Trp15, Arg35, and Lys101. Lys101 and Gly129 together coordinate sn-glycerol 3-phosphate. Position 133 (Ala133) interacts with NADPH. Sn-glycerol 3-phosphate is bound by residues Lys184, Asp237, Ser247, Arg248, and Asn249. Lys184 functions as the Proton acceptor in the catalytic mechanism. Arg248 contributes to the NADPH binding site. 2 residues coordinate NADPH: Val268 and Glu270.

Belongs to the NAD-dependent glycerol-3-phosphate dehydrogenase family.

The protein resides in the cytoplasm. The enzyme catalyses sn-glycerol 3-phosphate + NAD(+) = dihydroxyacetone phosphate + NADH + H(+). It carries out the reaction sn-glycerol 3-phosphate + NADP(+) = dihydroxyacetone phosphate + NADPH + H(+). Its pathway is membrane lipid metabolism; glycerophospholipid metabolism. Catalyzes the reduction of the glycolytic intermediate dihydroxyacetone phosphate (DHAP) to sn-glycerol 3-phosphate (G3P), the key precursor for phospholipid synthesis. This is Glycerol-3-phosphate dehydrogenase [NAD(P)+] from Acidiphilium cryptum (strain JF-5).